The chain runs to 338 residues: Uroporphyrinogen decarboxylase (338 aa).

Residues 21–25 (RQAGR), Asp71, Tyr146, Ser201, and His316 contribute to the substrate site.

Belongs to the uroporphyrinogen decarboxylase family. In terms of assembly, homodimer.

Its subcellular location is the cytoplasm. It catalyses the reaction uroporphyrinogen III + 4 H(+) = coproporphyrinogen III + 4 CO2. It functions in the pathway porphyrin-containing compound metabolism; protoporphyrin-IX biosynthesis; coproporphyrinogen-III from 5-aminolevulinate: step 4/4. Catalyzes the decarboxylation of four acetate groups of uroporphyrinogen-III to yield coproporphyrinogen-III. The polypeptide is Uroporphyrinogen decarboxylase (Rickettsia akari (strain Hartford)).